A 1579-amino-acid polypeptide reads, in one-letter code: Eukaryotic translation initiation factor 4 gamma 3 (1579 aa).

2 disordered regions span residues 1 to 35 (MNSQ…RPGV) and 128 to 326 (TQQQ…GPSL). The segment covering 10-25 (PFFQRPQIQPPRAAIP) has biased composition (low complexity). The span at 26–35 (NSSPSIRPGV) shows a compositional bias: polar residues. A PABPC1-binding region spans residues 134–162 (PAKREKKTIRIRDPNQGGKDITEEIMSGG). A compositionally biased stretch (pro residues) spans 167 to 183 (PTPPIGRPASTPTPPQQ). A Phosphothreonine modification is found at Thr168. Phosphoserine is present on residues Ser230, Ser232, and Ser267. Positions 266–292 (SSPTSLPPLARSSLPSPMSAALSSQPL) are enriched in low complexity. Basic and acidic residues predominate over residues 295–308 (AEDKCELPSSKEED). The segment covering 315–326 (PTSCTAASGPSL) has biased composition (polar residues). 4 positions are modified to phosphoserine: Ser436, Ser470, Ser472, and Ser490. Basic and acidic residues predominate over residues 454 to 470 (RTCLSKDAKEMQDKAES). 3 disordered regions span residues 454 to 615 (RTCL…DTEG), 681 to 706 (RQTP…QRRE), and 724 to 744 (AENA…PESI). Positions 471–480 (ESDGQAEETA) are enriched in acidic residues. A compositionally biased stretch (polar residues) spans 481–501 (DPQSLHSGRSPAPVQTATTAP). 2 stretches are compositionally biased toward basic and acidic residues: residues 506 to 515 (KTKEQTRTPD) and 549 to 563 (SERD…KAEE). Residues 589–598 (SGSADSSADG) are compositionally biased toward low complexity. Positions 606 to 615 (ESWKPADTEG) are enriched in basic and acidic residues. Residues 614–625 (EGKKQYDREFLL) form an EIF4E-binding region. The eIF3/EIF4A-binding stretch occupies residues 694-1014 (VGPRRSQPGQ…EQRKVQQLMT (321 aa)). HEAT repeat units lie at residues 740-778 (DPES…LTVD), 779-826 (TEER…GNTV), 827-900 (NFRK…LKML), 901-939 (TEAI…DFEK), and 940-979 (AKPR…LCNW). One can recognise an MIF4G domain in the interval 750-978 (FRKVRSILNK…QDVIDLRLCN (229 aa)). The segment covering 855 to 871 (KELEAASAPEERTRLHD) has biased composition (basic and acidic residues). The interval 855–875 (KELEAASAPEERTRLHDELEE) is disordered. Residues 989-1018 (KTIEQIHKEAKIEEQEEQRKVQQLMTKEKR) adopt a coiled-coil conformation. Disordered stretches follow at residues 1009–1037 (VQQL…QGAK) and 1067–1214 (LGSW…LSEE). A compositionally biased stretch (low complexity) spans 1086–1098 (LRSSASSLNRFSP). The residue at position 1150 (Ser1150) is a Phosphoserine; by CaMK1. 2 stretches are compositionally biased toward basic and acidic residues: residues 1150–1169 (SSKD…EMLE) and 1179–1197 (DAER…ELAK). Positions 1154–1176 (LLDNQSQEEQRREMLETVKQLTG) form a coiled coil. Ser1212 carries the post-translational modification Phosphoserine. An MI domain is found at 1215-1337 (EVERKSKSII…SMRELIVEFS (123 aa)). The stretch at 1406–1438 (SSEALSKKELSAEELSQRLEKLIMEEKADDERI) forms a coiled coil. The region spanning 1410-1579 (LSKKELSAEE…REAEEESEDN (170 aa)) is the W2 domain. Residues 1427-1579 (LIMEEKADDE…REAEEESEDN (153 aa)) are EIF4A-binding. The interval 1565 to 1579 (FFTWLREAEEESEDN) is necessary but not sufficient for MKNK1-binding.

This sequence belongs to the eukaryotic initiation factor 4G family. Interacts with EIF4A, EIF4E, eIF3 and PABPC1. Part of a complex with EIF4E. eIF4F is a multi-subunit complex, the composition of which varies with external and internal environmental conditions. It is composed of at least EIF4A, EIF4E and EIF4G1/EIF4G3. EIF4G1/EIF4G3 interacts through its C-terminus with the serine/threonine kinases MKNK1, and with MKNK2. Appears to act as a scaffold protein, holding these enzymes in place to phosphorylate eIF4E. Non-phosphorylated EIF4EBP1 competes with EIF4G1/EIFG3 to interact with EIF4E; insulin stimulated MAP-kinase (MAPK1 and MAPK3) phosphorylation of EIF4EBP1 causes dissociation of the complex allowing EIF4G1/EIF4G3 to bind and consequent initiation of translation. EIF4G1/EIF4G3 interacts with PABPC1 to bring about circularization of the mRNA. Interacts with FXR1; promoting translation of FXR1 target mRNAs.

Functionally, component of the protein complex eIF4F, which is involved in the recognition of the mRNA cap, ATP-dependent unwinding of 5'-terminal secondary structure and recruitment of mRNA to the ribosome. Functional homolog of EIF4G1. This Mus musculus (Mouse) protein is Eukaryotic translation initiation factor 4 gamma 3 (Eif4g3).